Reading from the N-terminus, the 438-residue chain is Battenin (438 aa).

The segment at 1-25 is disordered; it reads MGGCAGSRRRLSDSEGEETVPEPRL. The Cytoplasmic segment spans residues 1–37; it reads MGGCAGSRRRLSDSEGEETVPEPRLPLLDHQGAHWKN. S12 and S14 each carry phosphoserine. Residues 38 to 58 form a helical membrane-spanning segment; it reads AVGFWLLGLCNNFSYVVMLSA. At 59-127 the chain is on the lumenal side; that stretch reads AHDILSHERT…GLHLLPYSPR (69 aa). 2 N-linked (GlcNAc...) asparagine glycosylation sites follow: N71 and N85. The helical transmembrane segment at 128 to 148 threads the bilayer; sequence VLVSGICAAGSFVLVAFSHSV. Over 149–151 the chain is Cytoplasmic; sequence GTS. The chain crosses the membrane as a helical span at residues 152–172; that stretch reads LCGVVLASISSGLGEVTFLSL. Residues 173–182 are Lumenal-facing; that stretch reads TAFYPRAVIS. A helical transmembrane segment spans residues 183-203; sequence WWSSGTGGAGLLGALSYLGLT. At 204-277 the chain is on the cytoplasmic side; the sequence is QAGLSPQQTL…SLSLRERWTV (74 aa). Residues 237–268 form a disordered region; the sequence is QDPGGEEEAESSARQPLIRTEAPESKPGSSSS. The Lysosomal targeting motif motif lies at 242 to 244; sequence EEE. The Lysosomal targeting motif. Required for AP1G1, AP2A2 and AP3D1 interaction signature appears at 253-254; that stretch reads LI. Residues 278–298 traverse the membrane as a helical segment; the sequence is FKGLLWYIVPLVVVYFAEYFI. The Lumenal portion of the chain corresponds to 299–346; the sequence is NQGLFELLFFRNTSLSHAQQYRWYQMLYQAGVFASRSSLRCCHIRFTW. N310 is a glycosylation site (N-linked (GlcNAc...) asparagine). Residues 347–367 form a helical membrane-spanning segment; the sequence is ALALLQCLNLAFLLADVWFGF. Residues 368–438 are Cytoplasmic-facing; that stretch reads LLSIYFVFLI…PLHDFLCQLS (71 aa). Positions 409-419 match the Lysosomal targeting motif motif; the sequence is MATTCISDTLG. At C435 the chain carries Cysteine methyl ester. C435 carries the S-farnesyl cysteine lipid modification. A propeptide spans 436–438 (removed in mature form); sequence QLS.

The protein belongs to the battenin family. As to quaternary structure, interacts with DCTN1, KIF3A, RAB7A and RILP. Interacts with CLN5. Highly glycosylated. In terms of processing, farnesylation is important for trafficking to lysosomes.

The protein resides in the lysosome membrane. Its subcellular location is the late endosome. The protein localises to the lysosome. In terms of biological role, mediates microtubule-dependent, anterograde transport connecting the Golgi network, endosomes, autophagosomes, lysosomes and plasma membrane, and participates in several cellular processes such as regulation of lysosomal pH, lysosome protein degradation, receptor-mediated endocytosis, autophagy, transport of proteins and lipids from the TGN, apoptosis and synaptic transmission. Facilitates the proteins transport from trans-Golgi network (TGN)-to other membrane compartments such as transport of microdomain-associated proteins to the plasma membrane, IGF2R transport to the lysosome where it regulates the CTSD release leading to regulation of CTSD maturation and thereby APP intracellular processing. Moreover regulates CTSD activity in response to osmotic stress. Also binds galactosylceramide and transports it from the trans Golgi to the rafts, which may have immediate and downstream effects on cell survival by modulating ceramide synthesis. At the plasma membrane, regulates actin-dependent events including filopodia formation, cell migration, and pinocytosis through ARF1-CDC42 pathway and also the cytoskeleton organization through interaction with MYH10 and fodrin leading to the regulation of the plasma membrane association of Na+, K+ ATPase complex. Regulates synaptic transmission in the amygdala, hippocampus, and cerebellum through regulation of synaptic vesicles density and their proximity to active zones leading to modulation of short-term plasticity and age-dependent anxious behavior, learning and memory. Regulates autophagic vacuoles (AVs) maturation by modulating the trafficking between endocytic and autophagolysosomal/lysosomal compartments, which involves vesicle fusion leading to regulation of degradation process. Also participates in cellular homeostasis of compounds such as, water, ions, amino acids, proteins and lipids in several tissue namely in brain and kidney through regulation of their transport and synthesis. The chain is Battenin from Macaca fascicularis (Crab-eating macaque).